The sequence spans 113 residues: Iron-sulfur cluster insertion protein ErpA (113 aa).

Residues cysteine 41, cysteine 105, and cysteine 107 each contribute to the iron-sulfur cluster site.

This sequence belongs to the HesB/IscA family. As to quaternary structure, homodimer. The cofactor is iron-sulfur cluster.

In terms of biological role, required for insertion of 4Fe-4S clusters for at least IspG. In Photobacterium profundum (strain SS9), this protein is Iron-sulfur cluster insertion protein ErpA.